The chain runs to 97 residues: Aspartyl/glutamyl-tRNA(Asn/Gln) amidotransferase subunit C (97 aa).

This sequence belongs to the GatC family. In terms of assembly, heterotrimer of A, B and C subunits.

The catalysed reaction is L-glutamyl-tRNA(Gln) + L-glutamine + ATP + H2O = L-glutaminyl-tRNA(Gln) + L-glutamate + ADP + phosphate + H(+). It catalyses the reaction L-aspartyl-tRNA(Asn) + L-glutamine + ATP + H2O = L-asparaginyl-tRNA(Asn) + L-glutamate + ADP + phosphate + 2 H(+). Functionally, allows the formation of correctly charged Asn-tRNA(Asn) or Gln-tRNA(Gln) through the transamidation of misacylated Asp-tRNA(Asn) or Glu-tRNA(Gln) in organisms which lack either or both of asparaginyl-tRNA or glutaminyl-tRNA synthetases. The reaction takes place in the presence of glutamine and ATP through an activated phospho-Asp-tRNA(Asn) or phospho-Glu-tRNA(Gln). The sequence is that of Aspartyl/glutamyl-tRNA(Asn/Gln) amidotransferase subunit C from Prochlorococcus marinus (strain MIT 9303).